A 93-amino-acid chain; its full sequence is CRISPR-associated endoribonuclease Cas2 3 (93 aa).

D10 provides a ligand contact to Mg(2+).

This sequence belongs to the CRISPR-associated endoribonuclease Cas2 protein family. Homodimer, forms a heterotetramer with a Cas1 homodimer. It depends on Mg(2+) as a cofactor.

In terms of biological role, CRISPR (clustered regularly interspaced short palindromic repeat), is an adaptive immune system that provides protection against mobile genetic elements (viruses, transposable elements and conjugative plasmids). CRISPR clusters contain sequences complementary to antecedent mobile elements and target invading nucleic acids. CRISPR clusters are transcribed and processed into CRISPR RNA (crRNA). Functions as a ssRNA-specific endoribonuclease. Involved in the integration of spacer DNA into the CRISPR cassette. The chain is CRISPR-associated endoribonuclease Cas2 3 from Chloroflexus aurantiacus (strain ATCC 29366 / DSM 635 / J-10-fl).